The primary structure comprises 75 residues: Large ribosomal subunit protein bL31 (75 aa).

It belongs to the bacterial ribosomal protein bL31 family. Type A subfamily. As to quaternary structure, part of the 50S ribosomal subunit.

Binds the 23S rRNA. This Chlorobium phaeobacteroides (strain BS1) protein is Large ribosomal subunit protein bL31.